We begin with the raw amino-acid sequence, 271 residues long: uncharacterized protein (271 aa).

It belongs to the HAD-like hydrolase superfamily.

This is an uncharacterized protein from Staphylococcus aureus (strain Mu50 / ATCC 700699).